A 253-amino-acid chain; its full sequence is 5-oxoprolinase subunit A (253 aa).

The protein belongs to the LamB/PxpA family. As to quaternary structure, forms a complex composed of PxpA, PxpB and PxpC.

It carries out the reaction 5-oxo-L-proline + ATP + 2 H2O = L-glutamate + ADP + phosphate + H(+). Functionally, catalyzes the cleavage of 5-oxoproline to form L-glutamate coupled to the hydrolysis of ATP to ADP and inorganic phosphate. The polypeptide is 5-oxoprolinase subunit A (Ruegeria pomeroyi (strain ATCC 700808 / DSM 15171 / DSS-3) (Silicibacter pomeroyi)).